The sequence spans 586 residues: Urease subunit alpha (586 aa).

Residues 134 to 586 (GAIDTHIHFI…LPMAQRYFLF (453 aa)) enclose the Urease domain. Positions 139, 141, and 222 each coordinate Ni(2+). Lysine 222 bears the N6-carboxylysine mark. Histidine 224 contributes to the substrate binding site. Residues histidine 251 and histidine 277 each contribute to the Ni(2+) site. The Proton donor role is filled by histidine 325. Position 365 (aspartate 365) interacts with Ni(2+).

Belongs to the metallo-dependent hydrolases superfamily. Urease alpha subunit family. In terms of assembly, heterotrimer of UreA (gamma), UreB (beta) and UreC (alpha) subunits. Three heterotrimers associate to form the active enzyme. Ni cation serves as cofactor. In terms of processing, carboxylation allows a single lysine to coordinate two nickel ions.

It is found in the cytoplasm. The enzyme catalyses urea + 2 H2O + H(+) = hydrogencarbonate + 2 NH4(+). It participates in nitrogen metabolism; urea degradation; CO(2) and NH(3) from urea (urease route): step 1/1. In Gloeothece citriformis (strain PCC 7424) (Cyanothece sp. (strain PCC 7424)), this protein is Urease subunit alpha.